The sequence spans 680 residues: Nodulation protein NolNO (680 aa).

This sequence belongs to the NodU/CmcH family.

It is found in the cytoplasm. Its function is as follows. Involved in the O-carbamoylation of nod factors. The protein is Nodulation protein NolNO (nolO) of Sinorhizobium fredii (strain NBRC 101917 / NGR234).